A 517-amino-acid chain; its full sequence is Ammonium transporter 3 (517 aa).

Residues 1–32 (MLNEPNALLRRDANSTIATVTELFPNEYSNAD) are Extracellular-facing. A helical membrane pass occupies residues 33–53 (IAYVLLSTVVVFTVTPGIALY). Residues 54 to 69 (YAGMVRKNSALSILTQ) lie on the Cytoplasmic side of the membrane. Residues 70-90 (SFLVTAVVFIQWYLFGYSLAC) form a helical membrane-spanning segment. The Extracellular segment spans residues 91–118 (SSGSSFYGTLWQGGMNHLWLEPYIPGST). A helical transmembrane segment spans residues 119–139 (IPAIVYFPFGGLFAVATAQLF). Residues 140–148 (AGAMAERGR) lie on the Cytoplasmic side of the membrane. A helical membrane pass occupies residues 149–169 (LIPSLVISFLYITLVYCPQAY). The Extracellular portion of the chain corresponds to 170-180 (WTWAPNGWLYT). Residues 181-201 (LGALDFAGGGPVHISSGFAAL) form a helical membrane-spanning segment. Residues 202 to 272 (AYSLCLGRRI…AHNPPHDAGM (71 aa)) are Cytoplasmic-facing. The chain crosses the membrane as a helical span at residues 273-293 (VYIGVVLIWFAWLCFNSGTLL). The Extracellular portion of the chain corresponds to 294–299 (TVNIRT). The helical transmembrane segment at 300 to 320 (AYIMTNTLISSSFGALTWAII) threads the bilayer. The Cytoplasmic portion of the chain corresponds to 321 to 327 (DYIRYRK). A helical membrane pass occupies residues 328 to 348 (FSTIGICEGAIAGLVGITPAC). A topological domain (extracellular) is located at residue Gly349. The helical transmembrane segment at 350–370 (FVFPWGAAAGGIVPALVCNFL) threads the bilayer. At 371-384 (HDLNEWIGVDETLR) the chain is on the cytoplasmic side. A helical membrane pass occupies residues 385–405 (VFNLHGIGGIVGSIVLGVVAH). The Extracellular segment spans residues 406 to 432 (PDVAASDGATVIDGGWAVHHWKQMGYQ). Residues 433-453 (FAGFTSVAAWSFVITAIICLL) traverse the membrane as a helical segment. At 454-517 (VDLVPGLHIR…NIKQEKQDEF (64 aa)) the chain is on the cytoplasmic side.

The protein belongs to the ammonia transporter channel (TC 1.A.11.2) family.

It localises to the membrane. Functionally, transporter for ammonium to use as a nitrogen source. The chain is Ammonium transporter 3 (amt3) from Schizosaccharomyces pombe (strain 972 / ATCC 24843) (Fission yeast).